The chain runs to 299 residues: Tryptophan prenyltransferase ComQ (299 aa).

Mg(2+) contacts are provided by aspartate 67 and aspartate 71.

It belongs to the FPP/GGPP synthase family. Mg(2+) serves as cofactor.

The protein resides in the cell membrane. It catalyses the reaction L-tryptophyl-[protein] + (2E,6E)-farnesyl diphosphate = (2S,3R)-3-farnesyl-2,3-dihydro-2,N(alpha)-cyclo-L-tryptophyl-[protein] + diphosphate. Its function is as follows. Part of a major quorum-sensing system that regulates the development of genetic competence. Involved in the maturation of the competence pheromone ComX. Acts by catalyzing the transfer of a farnesyl group on the ComX pheromone. Shows weak geranylation activity with geranyl diphosphate (GPP). The protein is Tryptophan prenyltransferase ComQ of Bacillus subtilis (strain 168).